The sequence spans 500 residues: NAD(P)H-quinone oxidoreductase chain 4, chloroplastic (500 aa).

The next 14 membrane-spanning stretches (helical) occupy residues 4-24 (FPWL…MLFL), 35-55 (YTIC…CYNF), 87-107 (IGTI…AFPV), 113-130 (LFHF…GSFS), 134-154 (LLLF…LLSM), 167-187 (FILY…GISL), 211-231 (ILFY…IPLH), 242-262 (HYST…YGLV), 272-292 (AHSM…IYAA), 305-325 (IAYS…SITD), 330-350 (GAIL…FLAG), 386-406 (LALP…GIIT), 416-436 (ILII…LLSM), and 462-482 (LFLS…PDFV).

Belongs to the complex I subunit 4 family.

It is found in the plastid. The protein resides in the chloroplast thylakoid membrane. The catalysed reaction is a plastoquinone + NADH + (n+1) H(+)(in) = a plastoquinol + NAD(+) + n H(+)(out). It catalyses the reaction a plastoquinone + NADPH + (n+1) H(+)(in) = a plastoquinol + NADP(+) + n H(+)(out). This Nasturtium officinale (Watercress) protein is NAD(P)H-quinone oxidoreductase chain 4, chloroplastic.